We begin with the raw amino-acid sequence, 677 residues long: Methionine--tRNA ligase (677 aa).

The short motif at 15–25 is the 'HIGH' region element; it reads PYANGSIHLGH. Zn(2+) contacts are provided by Cys146, Cys149, Cys159, and Cys162. Residues 333–337 carry the 'KMSKS' region motif; sequence KMSKS. Lys336 contributes to the ATP binding site. One can recognise a tRNA-binding domain in the interval 575–677; the sequence is DFAKVDLRVA…AGAKPGHQVK (103 aa).

Belongs to the class-I aminoacyl-tRNA synthetase family. MetG type 1 subfamily. Homodimer. Zn(2+) is required as a cofactor.

Its subcellular location is the cytoplasm. The catalysed reaction is tRNA(Met) + L-methionine + ATP = L-methionyl-tRNA(Met) + AMP + diphosphate. Its function is as follows. Is required not only for elongation of protein synthesis but also for the initiation of all mRNA translation through initiator tRNA(fMet) aminoacylation. The chain is Methionine--tRNA ligase (metG) from Escherichia coli (strain K12).